Here is a 421-residue protein sequence, read N- to C-terminus: Zinc metalloproteinase-disintegrin-like lachestatin-1 (421 aa).

Residues 10 to 206 (KYVKLVLVAD…DMPQCILEKP (197 aa)) enclose the Peptidase M12B domain. Intrachain disulfides connect C121/C201, C161/C185, and C163/C168. H146 contacts Zn(2+). E147 is a catalytic residue. Zn(2+)-binding residues include H150 and H156. The Disintegrin domain maps to 214 to 299 (PPVCGNYFVE…AECTDRFQRN (86 aa)). 6 residues coordinate Ca(2+): V216, N219, F221, E223, E226, and D229. 14 disulfide bridges follow: C217/C246, C228/C241, C230/C236, C240/C263, C254/C260, C259/C285, C272/C292, C279/C310, C303/C315, C322/C372, C337/C383, C350/C360, C367/C409, and C403/C414. Residues 278-280 (ECD) carry the D/ECD-tripeptide motif. Residues D280, M281, D283, D294, and R295 each contribute to the Ca(2+) site. N312 carries N-linked (GlcNAc...) asparagine glycosylation.

The protein belongs to the venom metalloproteinase (M12B) family. P-III subfamily. P-IIIc sub-subfamily. Homodimer; disulfide-linked. The cofactor is Zn(2+). As to expression, expressed by the venom gland.

The protein localises to the secreted. Its function is as follows. Snake venom zinc metalloprotease that induces apoptosis in vascular endothelial cells (VEC), without degrading the extracellular matrix (it cannot cleave collagen) or inhibiting adhesion of VEC. Has also fibrinogenolytic and hemorrhagic activities. The sequence is that of Zinc metalloproteinase-disintegrin-like lachestatin-1 from Lachesis muta rhombeata (Bushmaster).